Consider the following 316-residue polypeptide: Small ribosomal subunit protein mS26 (316 aa).

Positions 41–71 (TTRSARDSVSIPPDSPNYIKVPEPPQSSEVR) are disordered.

This sequence belongs to the mitochondrion-specific ribosomal protein mS26 family. In terms of assembly, component of the mitochondrial small ribosomal subunit (mt-SSU). Mature N.crassa 74S mitochondrial ribosomes consist of a small (37S) and a large (54S) subunit. The 37S small subunit contains a 16S ribosomal RNA (16S mt-rRNA) and 32 different proteins. The 54S large subunit contains a 23S rRNA (23S mt-rRNA) and 42 different proteins.

The protein localises to the mitochondrion. In terms of biological role, component of the mitochondrial ribosome (mitoribosome), a dedicated translation machinery responsible for the synthesis of mitochondrial genome-encoded proteins, including at least some of the essential transmembrane subunits of the mitochondrial respiratory chain. The mitoribosomes are attached to the mitochondrial inner membrane and translation products are cotranslationally integrated into the membrane. The sequence is that of Small ribosomal subunit protein mS26 (pet123) from Neurospora crassa (strain ATCC 24698 / 74-OR23-1A / CBS 708.71 / DSM 1257 / FGSC 987).